The sequence spans 331 residues: Glyceraldehyde-3-phosphate dehydrogenase, cytosolic (331 aa).

Residues 11-12 (RI), Asp-33, and Arg-77 contribute to the NAD(+) site. Residues 148–150 (SCT), Thr-179, 208–209 (TG), and Arg-231 contribute to the D-glyceraldehyde 3-phosphate site. Cys-149 (nucleophile) is an active-site residue. Asn-313 contacts NAD(+).

The protein belongs to the glyceraldehyde-3-phosphate dehydrogenase family. In terms of assembly, homotetramer.

The protein localises to the cytoplasm. The catalysed reaction is D-glyceraldehyde 3-phosphate + phosphate + NAD(+) = (2R)-3-phospho-glyceroyl phosphate + NADH + H(+). It functions in the pathway carbohydrate degradation; glycolysis; pyruvate from D-glyceraldehyde 3-phosphate: step 1/5. The polypeptide is Glyceraldehyde-3-phosphate dehydrogenase, cytosolic (GAPC) (Leishmania mexicana).